A 498-amino-acid polypeptide reads, in one-letter code: Lysine--tRNA ligase (498 aa).

Residues glutamate 408 and glutamate 415 each contribute to the Mg(2+) site.

It belongs to the class-II aminoacyl-tRNA synthetase family. As to quaternary structure, homodimer. Mg(2+) serves as cofactor.

Its subcellular location is the cytoplasm. It carries out the reaction tRNA(Lys) + L-lysine + ATP = L-lysyl-tRNA(Lys) + AMP + diphosphate. The chain is Lysine--tRNA ligase from Listeria welshimeri serovar 6b (strain ATCC 35897 / DSM 20650 / CCUG 15529 / CIP 8149 / NCTC 11857 / SLCC 5334 / V8).